The following is a 158-amino-acid chain: Coenzyme F420 hydrogenase subunit delta (158 aa).

The protein belongs to the peptidase A31 family.

This Methanothermobacter thermautotrophicus (strain ATCC 29096 / DSM 1053 / JCM 10044 / NBRC 100330 / Delta H) (Methanobacterium thermoautotrophicum) protein is Coenzyme F420 hydrogenase subunit delta (frhD).